An 82-amino-acid chain; its full sequence is UPF0213 protein SERP0126 (82 aa).

In terms of domain architecture, GIY-YIG spans 2–77 (DKHFVYIVKC…KTYTRQQKLK (76 aa)).

The protein belongs to the UPF0213 family.

The protein is UPF0213 protein SERP0126 of Staphylococcus epidermidis (strain ATCC 35984 / DSM 28319 / BCRC 17069 / CCUG 31568 / BM 3577 / RP62A).